Here is a 572-residue protein sequence, read N- to C-terminus: Phosphoenolpyruvate-protein phosphotransferase (572 aa).

The active-site Tele-phosphohistidine intermediate is H191. Residues R298 and R334 each contribute to the phosphoenolpyruvate site. The Mg(2+) site is built by E433 and D457. Phosphoenolpyruvate is bound by residues 456 to 457 (ND) and R467. C504 acts as the Proton donor in catalysis.

The protein belongs to the PEP-utilizing enzyme family. As to quaternary structure, homodimer. Mg(2+) serves as cofactor.

It is found in the cytoplasm. It carries out the reaction L-histidyl-[protein] + phosphoenolpyruvate = N(pros)-phospho-L-histidyl-[protein] + pyruvate. General (non sugar-specific) component of the phosphoenolpyruvate-dependent sugar phosphotransferase system (sugar PTS). This major carbohydrate active-transport system catalyzes the phosphorylation of incoming sugar substrates concomitantly with their translocation across the cell membrane. Enzyme I transfers the phosphoryl group from phosphoenolpyruvate (PEP) to the phosphoryl carrier protein (HPr). The polypeptide is Phosphoenolpyruvate-protein phosphotransferase (ptsI) (Staphylococcus aureus (strain MRSA252)).